A 260-amino-acid polypeptide reads, in one-letter code: Hydroxyacylglutathione hydrolase (260 aa).

Zn(2+)-binding residues include histidine 61, histidine 63, aspartate 65, histidine 66, histidine 119, aspartate 138, and histidine 176.

It belongs to the metallo-beta-lactamase superfamily. Glyoxalase II family. As to quaternary structure, monomer. Requires Zn(2+) as cofactor.

The enzyme catalyses an S-(2-hydroxyacyl)glutathione + H2O = a 2-hydroxy carboxylate + glutathione + H(+). Its pathway is secondary metabolite metabolism; methylglyoxal degradation; (R)-lactate from methylglyoxal: step 2/2. Thiolesterase that catalyzes the hydrolysis of S-D-lactoyl-glutathione to form glutathione and D-lactic acid. The sequence is that of Hydroxyacylglutathione hydrolase from Brucella suis (strain ATCC 23445 / NCTC 10510).